Reading from the N-terminus, the 430-residue chain is N-acylneuraminate cytidylyltransferase A (430 aa).

The disordered stretch occupies residues 1–29 (MDAVNENGKRAMKDDSHGNSTSPKRRKSR). The span at 7–17 (NGKRAMKDDSH) shows a compositional bias: basic and acidic residues. The Bipartite nuclear localization signal motif lies at 9 to 27 (KRAMKDDSHGNSTSPKRRK). Residues R38, N48, R97, S106, S108, and Q129 each coordinate substrate. The active site involves R187.

This sequence belongs to the CMP-NeuNAc synthase family. As to quaternary structure, homotetramer.

It is found in the nucleus. The enzyme catalyses an N-acylneuraminate + CTP = a CMP-N-acyl-beta-neuraminate + diphosphate. Its pathway is amino-sugar metabolism; N-acetylneuraminate metabolism. Its function is as follows. Catalyzes the activation of N-acetylneuraminic acid (NeuNAc) to cytidine 5'-monophosphate N-acetylneuraminic acid (CMP-NeuNAc), a substrate required for the addition of sialic acid. Also has activity towards N-glycolylneuraminic acid (Neu5Gc). Has weak activity towards 2-keto-3-deoxy-D-glycero-D-galacto-nononic acid (KDN). This Danio rerio (Zebrafish) protein is N-acylneuraminate cytidylyltransferase A.